A 445-amino-acid polypeptide reads, in one-letter code: POU domain, class 3, transcription factor 2 (445 aa).

Disordered regions lie at residues 63–173 (TALS…WRSA), 203–269 (LGAG…TPTS), 336–361 (EADS…KKRT), and 411–445 (EKRM…TPVQ). A compositionally biased stretch (gly residues) spans 68 to 90 (GGSGGGGGGGGGGGGGGGGGGDG). Low complexity predominate over residues 125 to 151 (QQQHQQQQQQQQQQQQQQQQQQQQQQQ). The span at 217 to 226 (LRDAHDEPHH) shows a compositional bias: basic and acidic residues. A compositionally biased stretch (basic residues) spans 227 to 237 (ADHHPHPHSHP). The segment covering 239–253 (QQPPPPPPPQGPPGH) has biased composition (pro residues). The POU-specific domain occupies 264-338 (EDTPTSDDLE…LLNKWLEEAD (75 aa)). Ser343 carries the post-translational modification Phosphoserine. Positions 356–415 (KRKKRTSIEVSVKGALESHFLKCPKPSAQEITSLADSLQLEKEVVRVWFCNRRQKEKRMT) form a DNA-binding region, homeobox.

Belongs to the POU transcription factor family. Class-3 subfamily. As to quaternary structure, interacts with PQBP1. Interaction with ISL1. In terms of tissue distribution, expressed specifically at high levels in the brain.

The protein localises to the nucleus. In terms of biological role, transcription factor that plays a key role in neuronal differentiation. Binds preferentially to the recognition sequence which consists of two distinct half-sites, ('GCAT') and ('TAAT'), separated by a non-conserved spacer region of 0, 2, or 3 nucleotides. Acts as a transcriptional activator when binding cooperatively with SOX4, SOX11, or SOX12 to gene promoters. The combination of three transcription factors, ASCL1, POU3F2/BRN2 and MYT1L, is sufficient to reprogram fibroblasts and other somatic cells into induced neuronal (iN) cells in vitro. Acts downstream of ASCL1, accessing chromatin that has been opened by ASCL1, and promotes transcription of neuronal genes. This is POU domain, class 3, transcription factor 2 (Pou3f2) from Rattus norvegicus (Rat).